A 210-amino-acid polypeptide reads, in one-letter code: Na(+)-translocating NADH-quinone reductase subunit D (210 aa).

6 helical membrane-spanning segments follow: residues 14–34 (PIVS…ALAV), 42–62 (LVMT…ISIL), 72–92 (IIVQ…VLQA), 103–123 (VFVG…AYAM), 131–151 (FMDG…VGFI), and 178–198 (NGLL…IWII).

Belongs to the NqrDE/RnfAE family. As to quaternary structure, composed of six subunits; NqrA, NqrB, NqrC, NqrD, NqrE and NqrF.

The protein resides in the cell inner membrane. It carries out the reaction a ubiquinone + n Na(+)(in) + NADH + H(+) = a ubiquinol + n Na(+)(out) + NAD(+). NQR complex catalyzes the reduction of ubiquinone-1 to ubiquinol by two successive reactions, coupled with the transport of Na(+) ions from the cytoplasm to the periplasm. NqrA to NqrE are probably involved in the second step, the conversion of ubisemiquinone to ubiquinol. The chain is Na(+)-translocating NADH-quinone reductase subunit D from Shewanella halifaxensis (strain HAW-EB4).